The chain runs to 89 residues: Small ribosomal subunit protein uS15 (89 aa).

Belongs to the universal ribosomal protein uS15 family. Part of the 30S ribosomal subunit. Forms a bridge to the 50S subunit in the 70S ribosome, contacting the 23S rRNA.

Its function is as follows. One of the primary rRNA binding proteins, it binds directly to 16S rRNA where it helps nucleate assembly of the platform of the 30S subunit by binding and bridging several RNA helices of the 16S rRNA. Forms an intersubunit bridge (bridge B4) with the 23S rRNA of the 50S subunit in the ribosome. The polypeptide is Small ribosomal subunit protein uS15 (Bartonella quintana (strain Toulouse) (Rochalimaea quintana)).